The following is a 631-amino-acid chain: Phosphomethylpyrimidine synthase (631 aa).

The disordered stretch occupies residues 54-80 (TLVGGDKDKPRYETNEPIPVYDTSGPY). The segment covering 58–67 (GDKDKPRYET) has biased composition (basic and acidic residues). Residues asparagine 239, methionine 268, tyrosine 297, histidine 333, 353–355 (SRG), 394–397 (DGLR), and glutamate 433 each bind substrate. Zn(2+) is bound at residue histidine 437. Tyrosine 460 is a binding site for substrate. Histidine 501 provides a ligand contact to Zn(2+). [4Fe-4S] cluster is bound by residues cysteine 581, cysteine 584, and cysteine 589.

Belongs to the ThiC family. As to quaternary structure, homodimer. It depends on [4Fe-4S] cluster as a cofactor.

It catalyses the reaction 5-amino-1-(5-phospho-beta-D-ribosyl)imidazole + S-adenosyl-L-methionine = 4-amino-2-methyl-5-(phosphooxymethyl)pyrimidine + CO + 5'-deoxyadenosine + formate + L-methionine + 3 H(+). It participates in cofactor biosynthesis; thiamine diphosphate biosynthesis. Catalyzes the synthesis of the hydroxymethylpyrimidine phosphate (HMP-P) moiety of thiamine from aminoimidazole ribotide (AIR) in a radical S-adenosyl-L-methionine (SAM)-dependent reaction. This is Phosphomethylpyrimidine synthase from Klebsiella pneumoniae subsp. pneumoniae (strain ATCC 700721 / MGH 78578).